Consider the following 387-residue polypeptide: MDEPWWEGRVASDVHCTLREKELKLPTFRAHSPLLKSRRFFVDILTLLSRHCHLCPSARHLAIYLLDHFMDQYNITTSKQLYTVAVSCLLLASKFEDREDRVPKLEQINNTRILSSQNFSLTKKELLTTELLLLEAFSWDLCLPTPAHFLDYYLLASISQKDHHCHAWPTTCLRKTKECLKEYAHYFLEVTLQDHIFYKFQPSVVAAACVGASRICLQLSPYWTRDLQRVSSYSLEHLSTCIEILLVAYDNVLKDAVAVKSQTLAMVPGSSSAPAQVLFQPPTYPTLSQPPPTTLAQFQSPAQDLCLAYRDSLQAHRSGGLLSGDTGPSLHTPYPTLQPLDMCPVPVPASLSMQMAIAAEPRHCLTASYGSSYFSGSHMFPAGCFDS.

A Cyclin N-terminal domain is found at 13 to 142 (DVHCTLREKE…LLEAFSWDLC (130 aa)).

The protein belongs to the cyclin family. Cyclin J subfamily.

The polypeptide is Cyclin-J-like protein (Ccnjl) (Mus musculus (Mouse)).